We begin with the raw amino-acid sequence, 361 residues long: Lipoyl synthase 1, chloroplastic (361 aa).

[4Fe-4S] cluster contacts are provided by Cys-87, Cys-92, Cys-98, Cys-124, Cys-128, Cys-131, and Ser-339. The Radical SAM core domain occupies 107 to 328 (GEGDGIATAT…KEYGESVGFR (222 aa)).

It belongs to the radical SAM superfamily. Lipoyl synthase family. [4Fe-4S] cluster serves as cofactor.

It is found in the plastid. The protein resides in the chloroplast. It catalyses the reaction [[Fe-S] cluster scaffold protein carrying a second [4Fe-4S](2+) cluster] + N(6)-octanoyl-L-lysyl-[protein] + 2 oxidized [2Fe-2S]-[ferredoxin] + 2 S-adenosyl-L-methionine + 4 H(+) = [[Fe-S] cluster scaffold protein] + N(6)-[(R)-dihydrolipoyl]-L-lysyl-[protein] + 4 Fe(3+) + 2 hydrogen sulfide + 2 5'-deoxyadenosine + 2 L-methionine + 2 reduced [2Fe-2S]-[ferredoxin]. The protein operates within protein modification; protein lipoylation via endogenous pathway; protein N(6)-(lipoyl)lysine from octanoyl-[acyl-carrier-protein]: step 2/2. Catalyzes the radical-mediated insertion of two sulfur atoms into the C-6 and C-8 positions of the octanoyl moiety bound to the lipoyl domains of lipoate-dependent enzymes, thereby converting the octanoylated domains into lipoylated derivatives. The protein is Lipoyl synthase 1, chloroplastic of Zea mays (Maize).